A 517-amino-acid polypeptide reads, in one-letter code: UDP-N-acetylmuramoylalanine--D-glutamate ligase (517 aa).

143 to 149 (GTNGKTT) contacts ATP.

The protein belongs to the MurCDEF family.

The protein localises to the cytoplasm. The enzyme catalyses UDP-N-acetyl-alpha-D-muramoyl-L-alanine + D-glutamate + ATP = UDP-N-acetyl-alpha-D-muramoyl-L-alanyl-D-glutamate + ADP + phosphate + H(+). It participates in cell wall biogenesis; peptidoglycan biosynthesis. Functionally, cell wall formation. Catalyzes the addition of glutamate to the nucleotide precursor UDP-N-acetylmuramoyl-L-alanine (UMA). The sequence is that of UDP-N-acetylmuramoylalanine--D-glutamate ligase from Leifsonia xyli subsp. xyli (strain CTCB07).